We begin with the raw amino-acid sequence, 273 residues long: WIMGHMVNAIAQIDEFVNLGANSIETDVSFDDSANPEYTYHGVPCDCGRTCTKWEYFNEFLKGLRKATTPGDSKYHEKLVLVVFDLKTSSLYDNQASDAGKKLAKSLLQNYWNNGNNGGRAYIVLSIPNLAHYKLITGFKETLTSEGHPELMDKVGYGFSGNDEIGDVAKTYKKAGVTGHVWQSDGITNCLLRGLDRVRKAVANRDSSNGYINKVYYWIVDKRATTRDALDAGVDGIMTNYPDVIADVLNESAYKAKFRIASYDDNPWETFKN.

Residue His5 is part of the active site. The Mg(2+) site is built by Glu25 and Asp27. Residue His41 is the Nucleophile of the active site. 2 disulfides stabilise this stretch: Cys45-Cys51 and Cys47-Cys190. Asp85 is a Mg(2+) binding site. N-linked (GlcNAc...) asparagine glycosylation is present at Asn250.

This sequence belongs to the arthropod phospholipase D family. Class II subfamily. Mg(2+) serves as cofactor. In terms of tissue distribution, expressed by the venom gland.

It localises to the secreted. The enzyme catalyses an N-(acyl)-sphingosylphosphocholine = an N-(acyl)-sphingosyl-1,3-cyclic phosphate + choline. The catalysed reaction is an N-(acyl)-sphingosylphosphoethanolamine = an N-(acyl)-sphingosyl-1,3-cyclic phosphate + ethanolamine. It catalyses the reaction a 1-acyl-sn-glycero-3-phosphocholine = a 1-acyl-sn-glycero-2,3-cyclic phosphate + choline. It carries out the reaction a 1-acyl-sn-glycero-3-phosphoethanolamine = a 1-acyl-sn-glycero-2,3-cyclic phosphate + ethanolamine. Dermonecrotic toxins cleave the phosphodiester linkage between the phosphate and headgroup of certain phospholipids (sphingolipid and lysolipid substrates), forming an alcohol (often choline) and a cyclic phosphate. This toxin acts on sphingomyelin (SM). It may also act on ceramide phosphoethanolamine (CPE), lysophosphatidylcholine (LPC) and lysophosphatidylethanolamine (LPE), but not on lysophosphatidylserine (LPS), and lysophosphatidylglycerol (LPG). It acts by transphosphatidylation, releasing exclusively cyclic phosphate products as second products. Induces dermonecrosis, hemolysis, increased vascular permeability, edema, inflammatory response, and platelet aggregation. The chain is Dermonecrotic toxin LdSicTox-alphaIB1aiv from Loxosceles deserta (Desert recluse spider).